The following is a 451-amino-acid chain: tRNA-2-methylthio-N(6)-dimethylallyladenosine synthase (451 aa).

The region spanning 18 to 134 (ARVYLETYGC…LPNLLDLAES (117 aa)) is the MTTase N-terminal domain. [4Fe-4S] cluster-binding residues include Cys-27, Cys-63, Cys-97, Cys-170, Cys-174, and Cys-177. The region spanning 156-386 (RKNGHSAFLA…IALQQKISAE (231 aa)) is the Radical SAM core domain. In terms of domain architecture, TRAM spans 389–451 (RNDIGNTHEV…TSATLIGNAL (63 aa)).

It belongs to the methylthiotransferase family. MiaB subfamily. In terms of assembly, monomer. The cofactor is [4Fe-4S] cluster.

It localises to the cytoplasm. The catalysed reaction is N(6)-dimethylallyladenosine(37) in tRNA + (sulfur carrier)-SH + AH2 + 2 S-adenosyl-L-methionine = 2-methylsulfanyl-N(6)-dimethylallyladenosine(37) in tRNA + (sulfur carrier)-H + 5'-deoxyadenosine + L-methionine + A + S-adenosyl-L-homocysteine + 2 H(+). Functionally, catalyzes the methylthiolation of N6-(dimethylallyl)adenosine (i(6)A), leading to the formation of 2-methylthio-N6-(dimethylallyl)adenosine (ms(2)i(6)A) at position 37 in tRNAs that read codons beginning with uridine. This is tRNA-2-methylthio-N(6)-dimethylallyladenosine synthase from Chloroherpeton thalassium (strain ATCC 35110 / GB-78).